Reading from the N-terminus, the 255-residue chain is Type III pantothenate kinase (255 aa).

6-13 (DVGNTNIV) lines the ATP pocket. Substrate contacts are provided by residues Tyr100 and 107–110 (GADR). The active-site Proton acceptor is the Asp109. Residue Asp129 participates in K(+) binding. Thr132 serves as a coordination point for ATP. Thr184 serves as a coordination point for substrate.

Belongs to the type III pantothenate kinase family. In terms of assembly, homodimer. NH4(+) serves as cofactor. The cofactor is K(+).

The protein resides in the cytoplasm. It carries out the reaction (R)-pantothenate + ATP = (R)-4'-phosphopantothenate + ADP + H(+). It functions in the pathway cofactor biosynthesis; coenzyme A biosynthesis; CoA from (R)-pantothenate: step 1/5. Its function is as follows. Catalyzes the phosphorylation of pantothenate (Pan), the first step in CoA biosynthesis. The sequence is that of Type III pantothenate kinase from Caldanaerobacter subterraneus subsp. tengcongensis (strain DSM 15242 / JCM 11007 / NBRC 100824 / MB4) (Thermoanaerobacter tengcongensis).